The following is a 612-amino-acid chain: Elongation factor 4 (612 aa).

In terms of domain architecture, tr-type G spans 11–193 (KHIRNFSIVA…RIVTDISAPT (183 aa)). GTP contacts are provided by residues 23-28 (DHGKST) and 140-143 (NKID).

Belongs to the TRAFAC class translation factor GTPase superfamily. Classic translation factor GTPase family. LepA subfamily.

The protein localises to the cell membrane. It catalyses the reaction GTP + H2O = GDP + phosphate + H(+). In terms of biological role, required for accurate and efficient protein synthesis under certain stress conditions. May act as a fidelity factor of the translation reaction, by catalyzing a one-codon backward translocation of tRNAs on improperly translocated ribosomes. Back-translocation proceeds from a post-translocation (POST) complex to a pre-translocation (PRE) complex, thus giving elongation factor G a second chance to translocate the tRNAs correctly. Binds to ribosomes in a GTP-dependent manner. The polypeptide is Elongation factor 4 (Lactobacillus delbrueckii subsp. bulgaricus (strain ATCC 11842 / DSM 20081 / BCRC 10696 / JCM 1002 / NBRC 13953 / NCIMB 11778 / NCTC 12712 / WDCM 00102 / Lb 14)).